A 309-amino-acid polypeptide reads, in one-letter code: ATP synthase gamma chain (309 aa).

This sequence belongs to the ATPase gamma chain family. F-type ATPases have 2 components, CF(1) - the catalytic core - and CF(0) - the membrane proton channel. CF(1) has five subunits: alpha(3), beta(3), gamma(1), delta(1), epsilon(1). CF(0) has three main subunits: a, b and c.

The protein resides in the cell membrane. In terms of biological role, produces ATP from ADP in the presence of a proton gradient across the membrane. The gamma chain is believed to be important in regulating ATPase activity and the flow of protons through the CF(0) complex. The sequence is that of ATP synthase gamma chain from Mycolicibacterium gilvum (strain PYR-GCK) (Mycobacterium gilvum (strain PYR-GCK)).